The sequence spans 240 residues: Biosynthetic peptidoglycan transglycosylase (240 aa).

Residues 15-35 traverse the membrane as a helical segment; it reads WMFYLGAVVAIAWLATQAFYF.

It belongs to the glycosyltransferase 51 family.

The protein resides in the cell inner membrane. The catalysed reaction is [GlcNAc-(1-&gt;4)-Mur2Ac(oyl-L-Ala-gamma-D-Glu-L-Lys-D-Ala-D-Ala)](n)-di-trans,octa-cis-undecaprenyl diphosphate + beta-D-GlcNAc-(1-&gt;4)-Mur2Ac(oyl-L-Ala-gamma-D-Glu-L-Lys-D-Ala-D-Ala)-di-trans,octa-cis-undecaprenyl diphosphate = [GlcNAc-(1-&gt;4)-Mur2Ac(oyl-L-Ala-gamma-D-Glu-L-Lys-D-Ala-D-Ala)](n+1)-di-trans,octa-cis-undecaprenyl diphosphate + di-trans,octa-cis-undecaprenyl diphosphate + H(+). It participates in cell wall biogenesis; peptidoglycan biosynthesis. Peptidoglycan polymerase that catalyzes glycan chain elongation from lipid-linked precursors. The chain is Biosynthetic peptidoglycan transglycosylase from Paraburkholderia xenovorans (strain LB400).